We begin with the raw amino-acid sequence, 151 residues long: MSVKEIVSNRKAFHNYEVLETFDAGIVLTGTEIKSLRDHGGNLGDAYVTISKGEAWLLQSSIAPYRFGNINNHEERRKRKLLLHKYELQKLDSRVSQKGLTIIPLSFFFSKGFVKVRIGCCRGKKSHDKRQALIEREKNRELAAAMKRSYR.

It belongs to the SmpB family.

It is found in the cytoplasm. Required for rescue of stalled ribosomes mediated by trans-translation. Binds to transfer-messenger RNA (tmRNA), required for stable association of tmRNA with ribosomes. tmRNA and SmpB together mimic tRNA shape, replacing the anticodon stem-loop with SmpB. tmRNA is encoded by the ssrA gene; the 2 termini fold to resemble tRNA(Ala) and it encodes a 'tag peptide', a short internal open reading frame. During trans-translation Ala-aminoacylated tmRNA acts like a tRNA, entering the A-site of stalled ribosomes, displacing the stalled mRNA. The ribosome then switches to translate the ORF on the tmRNA; the nascent peptide is terminated with the 'tag peptide' encoded by the tmRNA and targeted for degradation. The ribosome is freed to recommence translation, which seems to be the essential function of trans-translation. The polypeptide is SsrA-binding protein (Chlamydia muridarum (strain MoPn / Nigg)).